Reading from the N-terminus, the 163-residue chain is ATP synthase subunit b 1 (163 aa).

The chain crosses the membrane as a helical span at residues 6-26 (LAELWVAVAFLLFVGILIYVG).

It belongs to the ATPase B chain family. F-type ATPases have 2 components, F(1) - the catalytic core - and F(0) - the membrane proton channel. F(1) has five subunits: alpha(3), beta(3), gamma(1), delta(1), epsilon(1). F(0) has three main subunits: a(1), b(2) and c(10-14). The alpha and beta chains form an alternating ring which encloses part of the gamma chain. F(1) is attached to F(0) by a central stalk formed by the gamma and epsilon chains, while a peripheral stalk is formed by the delta and b chains.

The protein localises to the cell inner membrane. Functionally, f(1)F(0) ATP synthase produces ATP from ADP in the presence of a proton or sodium gradient. F-type ATPases consist of two structural domains, F(1) containing the extramembraneous catalytic core and F(0) containing the membrane proton channel, linked together by a central stalk and a peripheral stalk. During catalysis, ATP synthesis in the catalytic domain of F(1) is coupled via a rotary mechanism of the central stalk subunits to proton translocation. Component of the F(0) channel, it forms part of the peripheral stalk, linking F(1) to F(0). In Xanthobacter autotrophicus (strain ATCC BAA-1158 / Py2), this protein is ATP synthase subunit b 1.